Consider the following 145-residue polypeptide: D-aminoacyl-tRNA deacylase (145 aa).

Positions 137 to 138 match the Gly-cisPro motif, important for rejection of L-amino acids motif; sequence GP.

Belongs to the DTD family. In terms of assembly, homodimer.

It localises to the cytoplasm. The catalysed reaction is glycyl-tRNA(Ala) + H2O = tRNA(Ala) + glycine + H(+). It catalyses the reaction a D-aminoacyl-tRNA + H2O = a tRNA + a D-alpha-amino acid + H(+). Functionally, an aminoacyl-tRNA editing enzyme that deacylates mischarged D-aminoacyl-tRNAs. Also deacylates mischarged glycyl-tRNA(Ala), protecting cells against glycine mischarging by AlaRS. Acts via tRNA-based rather than protein-based catalysis; rejects L-amino acids rather than detecting D-amino acids in the active site. By recycling D-aminoacyl-tRNA to D-amino acids and free tRNA molecules, this enzyme counteracts the toxicity associated with the formation of D-aminoacyl-tRNA entities in vivo and helps enforce protein L-homochirality. The sequence is that of D-aminoacyl-tRNA deacylase from Salmonella enteritidis PT4 (strain P125109).